We begin with the raw amino-acid sequence, 397 residues long: Chorismate synthase (397 aa).

NADP(+)-binding residues include arginine 40 and arginine 46. FMN contacts are provided by residues 129–131 (RSS), 257–258 (QA), glycine 302, 317–321 (KPISS), and arginine 343.

This sequence belongs to the chorismate synthase family. In terms of assembly, homotetramer. FMNH2 is required as a cofactor.

The catalysed reaction is 5-O-(1-carboxyvinyl)-3-phosphoshikimate = chorismate + phosphate. Its pathway is metabolic intermediate biosynthesis; chorismate biosynthesis; chorismate from D-erythrose 4-phosphate and phosphoenolpyruvate: step 7/7. Functionally, catalyzes the anti-1,4-elimination of the C-3 phosphate and the C-6 proR hydrogen from 5-enolpyruvylshikimate-3-phosphate (EPSP) to yield chorismate, which is the branch point compound that serves as the starting substrate for the three terminal pathways of aromatic amino acid biosynthesis. This reaction introduces a second double bond into the aromatic ring system. The protein is Chorismate synthase of Chlorobium limicola (strain DSM 245 / NBRC 103803 / 6330).